The following is a 345-amino-acid chain: Tetraacyldisaccharide 4'-kinase (345 aa).

Residue 51-58 (HVGGAGKT) coordinates ATP.

It belongs to the LpxK family.

It carries out the reaction a lipid A disaccharide + ATP = a lipid IVA + ADP + H(+). Its pathway is glycolipid biosynthesis; lipid IV(A) biosynthesis; lipid IV(A) from (3R)-3-hydroxytetradecanoyl-[acyl-carrier-protein] and UDP-N-acetyl-alpha-D-glucosamine: step 6/6. In terms of biological role, transfers the gamma-phosphate of ATP to the 4'-position of a tetraacyldisaccharide 1-phosphate intermediate (termed DS-1-P) to form tetraacyldisaccharide 1,4'-bis-phosphate (lipid IVA). The protein is Tetraacyldisaccharide 4'-kinase of Bradyrhizobium sp. (strain BTAi1 / ATCC BAA-1182).